The chain runs to 45 residues: uncharacterized protein (45 aa).

The chain crosses the membrane as a helical span at residues 5-25 (IFFIFALSGILAACTVGGGVS).

The protein localises to the membrane. This is an uncharacterized protein from Haemophilus influenzae (strain ATCC 51907 / DSM 11121 / KW20 / Rd).